We begin with the raw amino-acid sequence, 153 residues long: Vasotocin-neurophysin VT 1 (153 aa).

The N-terminal stretch at 1–19 is a signal peptide; it reads MPQCALLLSLLGLLALSSA. The cysteines at positions 20 and 25 are disulfide-linked. G28 bears the Glycine amide mark. Intrachain disulfides connect C41–C85, C44–C58, C52–C75, C59–C65, C92–C105, C99–C117, and C106–C111.

Belongs to the vasopressin/oxytocin family. Seven disulfide bonds are present in neurophysin.

Its subcellular location is the secreted. Its function is as follows. Vasotocin is probably an antidiuretic hormone. The chain is Vasotocin-neurophysin VT 1 from Takifugu rubripes (Japanese pufferfish).